Here is a 328-residue protein sequence, read N- to C-terminus: GATA transcription factor 17 (328 aa).

The segment at M1–P68 is disordered. Over residues R14–A29 the composition is skewed to low complexity. 2 stretches are compositionally biased toward acidic residues: residues D30 to E39 and E47 to G63. The Tify domain occupies P100–G135. The CCT domain maps to R161–S203. Positions G198–P231 are disordered. A GATA-type zinc finger spans residues C236–C263.

The protein belongs to the type IV zinc-finger family. Class C subfamily.

The protein localises to the nucleus. Transcriptional activator that specifically binds 5'-GATA-3' or 5'-GAT-3' motifs within gene promoters. The sequence is that of GATA transcription factor 17 from Oryza sativa subsp. japonica (Rice).